Reading from the N-terminus, the 206-residue chain is UPF0328 protein ECU01_0050/ECU01_1560 (206 aa).

Disordered regions lie at residues 1-153 and 179-206; these read MPRP…HSHT and GRLHGSPTKGAQTAQQAQPHPPKQLATL. The span at 74 to 96 shows a compositional bias: basic and acidic residues; the sequence is HTEGCHTHEANPEPNTKHTETES. Composition is skewed to polar residues over residues 97–120 and 132–148; these read PKPQTSTQHHTPITIPSSLLSQNT and SRPSTIPANTYQPQSPH.

It belongs to the UPF0328 family.

This is UPF0328 protein ECU01_0050/ECU01_1560 from Encephalitozoon cuniculi (strain GB-M1) (Microsporidian parasite).